A 1339-amino-acid polypeptide reads, in one-letter code: Aldehyde oxidase 1 (1339 aa).

Residues 5–92 form the 2Fe-2S ferredoxin-type domain; the sequence is SELLFYVNGR…GAAVTTVEGI (88 aa). The [2Fe-2S] cluster site is built by cysteine 44, cysteine 49, cysteine 52, and cysteine 74. Residue glutamine 113 coordinates Mo-molybdopterin. The [2Fe-2S] cluster site is built by cysteine 114, cysteine 117, cysteine 149, and cysteine 151. Cysteine 151 is a Mo-molybdopterin binding site. The FAD-binding PCMH-type domain occupies 236-421; that stretch reads FGSDRMTWIS…ISVNIPYSRK (186 aa). FAD-binding positions include 264 to 271, alanine 345, serine 354, histidine 358, aspartate 367, and leucine 411; that span reads VVMGNTSV. Residues 807 to 808 and methionine 1048 contribute to the Mo-molybdopterin site; that span reads AF. Serine 1069 is modified (phosphoserine). Mo-molybdopterin is bound by residues 1089–1092, glutamine 1204, and leucine 1269; that span reads GSVV. Catalysis depends on glutamate 1271, which acts as the Proton acceptor; for azaheterocycle hydroxylase activity.

This sequence belongs to the xanthine dehydrogenase family. As to quaternary structure, homodimer. Requires [2Fe-2S] cluster as cofactor. FAD serves as cofactor. It depends on Mo-molybdopterin as a cofactor. Post-translationally, the N-terminus is blocked. Expressed at high levels in liver, lung and spleen. Also expressed in kindey, eye, testis, duodenum, esophagus and thymus (at protein level).

Its subcellular location is the cytoplasm. It catalyses the reaction an aldehyde + O2 + H2O = a carboxylate + H2O2 + H(+). The catalysed reaction is retinal + O2 + H2O = retinoate + H2O2 + H(+). Oxidase with broad substrate specificity, oxidizing aromatic azaheterocycles, such as N1-methylnicotinamide, N-methylphthalazinium and phthalazine, as well as aldehydes, such as benzaldehyde, retinal, pyridoxal, and vanillin. Plays a key role in the metabolism of xenobiotics and drugs containing aromatic azaheterocyclic substituents. Is probably involved in the regulation of reactive oxygen species homeostasis. May be a prominent source of superoxide generation via the one-electron reduction of molecular oxygen. May also catalyze nitric oxide (NO) production via the reduction of nitrite to NO with NADH or aldehyde as electron donor. May play a role in adipogenesis. The chain is Aldehyde oxidase 1 from Bos taurus (Bovine).